The following is a 430-amino-acid chain: Ribosomal protein uS12 methylthiotransferase RimO (430 aa).

Residues 2-119 form the MTTase N-terminal domain; the sequence is ISVYSISLGC…WPEMIGRALG (118 aa). 6 residues coordinate [4Fe-4S] cluster: Cys11, Cys46, Cys81, Cys145, Cys149, and Cys152. In terms of domain architecture, Radical SAM core spans 131–361; it reads STGPSYAYLK…MEVQAEISEE (231 aa). Residues 364–430 form the TRAM domain; sequence EGFTGSDEDV…SRTYDLVALS (67 aa).

This sequence belongs to the methylthiotransferase family. RimO subfamily. Requires [4Fe-4S] cluster as cofactor.

The protein localises to the cytoplasm. The enzyme catalyses L-aspartate(89)-[ribosomal protein uS12]-hydrogen + (sulfur carrier)-SH + AH2 + 2 S-adenosyl-L-methionine = 3-methylsulfanyl-L-aspartate(89)-[ribosomal protein uS12]-hydrogen + (sulfur carrier)-H + 5'-deoxyadenosine + L-methionine + A + S-adenosyl-L-homocysteine + 2 H(+). Catalyzes the methylthiolation of an aspartic acid residue of ribosomal protein uS12. The sequence is that of Ribosomal protein uS12 methylthiotransferase RimO from Oleidesulfovibrio alaskensis (strain ATCC BAA-1058 / DSM 17464 / G20) (Desulfovibrio alaskensis).